The chain runs to 456 residues: Argininosuccinate lyase (456 aa).

It belongs to the lyase 1 family. Argininosuccinate lyase subfamily.

It localises to the cytoplasm. It carries out the reaction 2-(N(omega)-L-arginino)succinate = fumarate + L-arginine. Its pathway is amino-acid biosynthesis; L-arginine biosynthesis; L-arginine from L-ornithine and carbamoyl phosphate: step 3/3. This is Argininosuccinate lyase from Shewanella amazonensis (strain ATCC BAA-1098 / SB2B).